We begin with the raw amino-acid sequence, 1495 residues long: Pregnancy zone protein (1495 aa).

The N-terminal stretch at 1 to 24 (MRRNQLPTPAFLLLFLLLPRDATT) is a signal peptide. C48 and C86 are disulfide-bonded. 2 N-linked (GlcNAc...) asparagine glycosylation sites follow: N55 and N157. 2 cysteine pairs are disulfide-bonded: C249/C298 and C267/C286. N-linked (GlcNAc...) asparagine glycans are attached at residues N382, N405, and N412. C469 and C562 form a disulfide bridge. A glycan (N-linked (GlcNAc...) asparagine) is linked at N568. Intrachain disulfides connect C594/C783, C642/C689, C833/C861, C859/C895, C933/C1339, and C1092/C1140. A bait region region spans residues 686 to 744 (PRFCQEFQHYPAMGGVAPQALAVAASGPGSSFRAMGVPMMGLDYSDEINQVVEVRETVR). N-linked (GlcNAc...) asparagine glycans are attached at residues N881 and N942. The segment at residues 984–987 (CGEQ) is a cross-link (isoglutamyl cysteine thioester (Cys-Gln)). A glycan (N-linked (GlcNAc...) asparagine) is linked at N1003. N-linked (GlcNAc...) asparagine glycosylation is found at N1385 and N1443.

The protein belongs to the protease inhibitor I39 (alpha-2-macroglobulin) family. As to expression, highest expression in liver, medium expression in ovary, heart and stomach. Low expression in lung, kidney and uterus. Protein found in plasma.

It localises to the secreted. In terms of biological role, is able to inhibit all four classes of proteinases by a unique 'trapping' mechanism. This protein has a peptide stretch, called the 'bait region' which contains specific cleavage sites for different proteinases. When a proteinase cleaves the bait region, a conformational change is induced in the protein which traps the proteinase. The entrapped enzyme remains active against low molecular weight substrates (activity against high molecular weight substrates is greatly reduced). Following cleavage in the bait region, a thioester bond is hydrolyzed and mediates the covalent binding of the protein to the proteinase. The chain is Pregnancy zone protein (Pzp) from Mus musculus (Mouse).